A 282-amino-acid polypeptide reads, in one-letter code: ATP phosphoribosyltransferase (282 aa).

It belongs to the ATP phosphoribosyltransferase family. Long subfamily. It depends on Mg(2+) as a cofactor.

Its subcellular location is the cytoplasm. It catalyses the reaction 1-(5-phospho-beta-D-ribosyl)-ATP + diphosphate = 5-phospho-alpha-D-ribose 1-diphosphate + ATP. It functions in the pathway amino-acid biosynthesis; L-histidine biosynthesis; L-histidine from 5-phospho-alpha-D-ribose 1-diphosphate: step 1/9. Its activity is regulated as follows. Feedback inhibited by histidine. Catalyzes the condensation of ATP and 5-phosphoribose 1-diphosphate to form N'-(5'-phosphoribosyl)-ATP (PR-ATP). Has a crucial role in the pathway because the rate of histidine biosynthesis seems to be controlled primarily by regulation of HisG enzymatic activity. In Pyrobaculum neutrophilum (strain DSM 2338 / JCM 9278 / NBRC 100436 / V24Sta) (Thermoproteus neutrophilus), this protein is ATP phosphoribosyltransferase.